A 796-amino-acid chain; its full sequence is Protein translocase subunit SecA 2 (796 aa).

Residues glutamine 84, 102-106 (GEGKT), and aspartate 496 each bind ATP.

The protein belongs to the SecA family. Monomer and homodimer. Part of the essential Sec protein translocation apparatus which comprises SecA, SecYEG and auxiliary proteins SecDF. Other proteins may also be involved.

The protein resides in the cell membrane. It localises to the cytoplasm. The enzyme catalyses ATP + H2O + cellular proteinSide 1 = ADP + phosphate + cellular proteinSide 2.. Part of the Sec protein translocase complex. Interacts with the SecYEG preprotein conducting channel. Has a central role in coupling the hydrolysis of ATP to the transfer of proteins into and across the cell membrane, serving as an ATP-driven molecular motor driving the stepwise translocation of polypeptide chains across the membrane. This Staphylococcus aureus (strain MRSA252) protein is Protein translocase subunit SecA 2.